Consider the following 554-residue polypeptide: Aspartyl/glutamyl-tRNA(Asn/Gln) amidotransferase subunit B (554 aa).

A disordered region spans residues 491-554; sequence AEQPTAPPPE…TPVSHQDAHA (64 aa). The span at 502 to 540 shows a compositional bias: low complexity; that stretch reads ESAAETPEAPPAVEDAPPEAPTEAITAEAGSAEAITAAS.

It belongs to the GatB/GatE family. GatB subfamily. Heterotrimer of A, B and C subunits.

The catalysed reaction is L-glutamyl-tRNA(Gln) + L-glutamine + ATP + H2O = L-glutaminyl-tRNA(Gln) + L-glutamate + ADP + phosphate + H(+). It catalyses the reaction L-aspartyl-tRNA(Asn) + L-glutamine + ATP + H2O = L-asparaginyl-tRNA(Asn) + L-glutamate + ADP + phosphate + 2 H(+). Allows the formation of correctly charged Asn-tRNA(Asn) or Gln-tRNA(Gln) through the transamidation of misacylated Asp-tRNA(Asn) or Glu-tRNA(Gln) in organisms which lack either or both of asparaginyl-tRNA or glutaminyl-tRNA synthetases. The reaction takes place in the presence of glutamine and ATP through an activated phospho-Asp-tRNA(Asn) or phospho-Glu-tRNA(Gln). This is Aspartyl/glutamyl-tRNA(Asn/Gln) amidotransferase subunit B from Gloeobacter violaceus (strain ATCC 29082 / PCC 7421).